Consider the following 431-residue polypeptide: Adenylosuccinate lyase (431 aa).

N(6)-(1,2-dicarboxyethyl)-AMP contacts are provided by residues 4–5 (RY), 67–69 (RHD), and 93–94 (TS). Catalysis depends on His141, which acts as the Proton donor/acceptor. Gln212 is a N(6)-(1,2-dicarboxyethyl)-AMP binding site. The Proton donor/acceptor role is filled by Ser262. Residues Ser263, 268–270 (KRN), and 307–311 (SVERV) each bind N(6)-(1,2-dicarboxyethyl)-AMP.

This sequence belongs to the lyase 1 family. Adenylosuccinate lyase subfamily. As to quaternary structure, homooligomer. Residues from neighboring subunits contribute catalytic and substrate-binding residues to each active site.

The catalysed reaction is N(6)-(1,2-dicarboxyethyl)-AMP = fumarate + AMP. It catalyses the reaction (2S)-2-[5-amino-1-(5-phospho-beta-D-ribosyl)imidazole-4-carboxamido]succinate = 5-amino-1-(5-phospho-beta-D-ribosyl)imidazole-4-carboxamide + fumarate. The protein operates within purine metabolism; AMP biosynthesis via de novo pathway; AMP from IMP: step 2/2. Its pathway is purine metabolism; IMP biosynthesis via de novo pathway; 5-amino-1-(5-phospho-D-ribosyl)imidazole-4-carboxamide from 5-amino-1-(5-phospho-D-ribosyl)imidazole-4-carboxylate: step 2/2. Functionally, catalyzes two reactions in de novo purine nucleotide biosynthesis. Catalyzes the breakdown of 5-aminoimidazole- (N-succinylocarboxamide) ribotide (SAICAR or 2-[5-amino-1-(5-phospho-beta-D-ribosyl)imidazole-4-carboxamido]succinate) to 5-aminoimidazole-4-carboxamide ribotide (AICAR or 5-amino-1-(5-phospho-beta-D-ribosyl)imidazole-4-carboxamide) and fumarate, and of adenylosuccinate (ADS or N(6)-(1,2-dicarboxyethyl)-AMP) to adenosine monophosphate (AMP) and fumarate. The protein is Adenylosuccinate lyase (purB) of Synechocystis sp. (strain ATCC 27184 / PCC 6803 / Kazusa).